We begin with the raw amino-acid sequence, 470 residues long: ESX-4 secretion system ATPase EccB4 (470 aa).

A helical transmembrane segment spans residues 44–64 (LALGCVLAIVAAMGCAFVALL).

This sequence belongs to the EccB family. In terms of assembly, part of the ESX-4 / type VII secretion system (T7SS), which is composed of cytosolic and membrane components.

Its subcellular location is the cell membrane. An ATPase. The protein is ESX-4 secretion system ATPase EccB4 (eccB4) of Mycobacterium tuberculosis (strain CDC 1551 / Oshkosh).